The chain runs to 554 residues: Glucose-6-phosphate isomerase (554 aa).

At Ser2 the chain carries N-acetylserine. Phosphothreonine is present on Thr53. D-glucose 6-phosphate is bound by residues 168–169 (GS), 218–223 (SKTFTT), Gln363, Glu367, His398, and Lys520. A Phosphothreonine modification is found at Thr220. Catalysis depends on Glu367, which acts as the Proton donor. Active-site residues include His398 and Lys520.

This sequence belongs to the GPI family. Homodimer.

The protein localises to the cytoplasm. Its subcellular location is the cytosol. It catalyses the reaction alpha-D-glucose 6-phosphate = beta-D-fructose 6-phosphate. The protein operates within carbohydrate degradation; glycolysis; D-glyceraldehyde 3-phosphate and glycerone phosphate from D-glucose: step 2/4. Strongly inhibited by the polyol (sugar alcohol) phosphate D-glucitol 6-phosphate (D-sorbitol 6-phosphate). Also inhibited by the polyol (sugar alcohol) phosphate D-ribitol 5-phosphate. In terms of biological role, in the cytoplasm, catalyzes the conversion of glucose-6-phosphate to fructose-6-phosphate, the second step in glycolysis, and the reverse reaction during gluconeogenesis. The chain is Glucose-6-phosphate isomerase (PGI1) from Saccharomyces cerevisiae (strain ATCC 204508 / S288c) (Baker's yeast).